Consider the following 487-residue polypeptide: Arginine ADP-riboxanase OspC3 (487 aa).

The segment covering 1–14 (MRVETHSPSFTNPN) has biased composition (polar residues). A disordered region spans residues 1-41 (MRVETHSPSFTNPNPAEACSGDPTEMGSRLSGVSRAPLPHA). Residues His-137, Gln-138, Ser-139, Ser-164, Asn-167, and Thr-168 each contribute to the NAD(+) site. The active site involves Glu-325. 2 ANK repeats span residues 368-398 (DAVT…EAKD) and 444-473 (RGDT…DRNL).

This sequence belongs to the OspC family.

It is found in the secreted. The protein localises to the host cytoplasm. It carries out the reaction L-arginyl-[protein] + NAD(+) = ADP-riboxanated L-argininyl-[protein] + nicotinamide + NH4(+) + H(+). Functionally, ADP-riboxanase effector that inhibits host cell pyroptosis. Acts by mediating arginine ADP-riboxanation of host CASP4/CASP11, blocking CASP4/CASP11 autoprocessing. This prevents CASP4 activation and ability to recognize and cleave GSDMD, thereby inhibiting LPS-induced pyroptosis. ADP-riboxanation takes place in two steps: OspC3 first catalyzes ADP-ribosylation of target Arg, and then initiates a deamination to remove one N-omega group. The chain is Arginine ADP-riboxanase OspC3 from Chromobacterium sp. (strain ATCC 53434 / SC 14030).